The chain runs to 619 residues: P-granule-associated protein deps-1 (619 aa).

Residues 62-101 (NFDNIEEAKNLERRSKIPLKFGEVILWNESDCDHDKRIIL) form a required for prg-1 binding region. 2 stretches are compositionally biased toward low complexity: residues 563-592 (SRAT…AATS) and 600-619 (GPSS…SSRV). The disordered stretch occupies residues 563-619 (SRATSARTTPAGSSIGSRSSIQSRASAATSVSSNRFVGPSSRRTPSGTPQSSTSSRV).

In terms of assembly, interacts (via N-terminus) with prg-1; the interaction is direct. May interact with edg-1. In terms of tissue distribution, expressed in germ cells.

It localises to the cytoplasmic granule. It is found in the cytoplasm. The protein resides in the perinuclear region. Functionally, component of P-granules which is required for P-granule formation and integrity in adult germ cells. Promotes the accumulation of glh-1 mRNA and localization of pgl-1 to P-granules. Involved in RNA-mediated gene silencing (RNAi) in the germline. In particular, it is required for piwi-interacting RNA (piRNA) gene silencing and positively regulates the formation of secondary 22G-RNAs, which are RNA-dependent RNA polymerase-derived endo-siRNAs, typically 22 nucleotides in length with a 5'guanosine residue. Its role in RNAi may also be through positively regulating the expression of the dsRNA-binding protein rde-4. Plays a role in small RNA-directed transgenerational epigenetic inheritance. This chain is P-granule-associated protein deps-1, found in Caenorhabditis elegans.